The following is a 120-amino-acid chain: MKLLYFFVVITVLVAVAAALPAKTEEQIAAEENQLVEDLVQYAGTRLTRKRATRCSKKLGEKCNYHCECCGATVACSTVYVGGKETNFCSDKTSNNGALNTVGQGLNVVSNGLSAFQCWG.

Positions 1 to 19 (MKLLYFFVVITVLVAVAAA) are cleaved as a signal peptide. Residues 20–51 (LPAKTEEQIAAEENQLVEDLVQYAGTRLTRKR) constitute a propeptide that is removed on maturation.

Belongs to the neurotoxin 25 family. F7 subfamily. Post-translationally, contains 4 disulfide bonds. As to expression, expressed by the venom gland.

The protein localises to the secreted. Functionally, weak insecticidal toxin with probable ion channel impairing activity. In vivo, induces paralysis when injected into sheep blowflies (L.cuprina). Shows weak toxicity, since it is only toxic at high doses, and flies recover within 24 hours. This is U3-hexatoxin-Hi1a from Hadronyche infensa (Fraser island funnel-web spider).